A 151-amino-acid polypeptide reads, in one-letter code: FAD synthase (151 aa).

ATP-binding positions include 9 to 10 (TF), 14 to 17 (HPGH), Asp96, and Tyr123.

This sequence belongs to the archaeal FAD synthase family. Homodimer. A divalent metal cation is required as a cofactor.

It carries out the reaction FMN + ATP + H(+) = FAD + diphosphate. Its pathway is cofactor biosynthesis; FAD biosynthesis; FAD from FMN: step 1/1. In terms of biological role, catalyzes the transfer of the AMP portion of ATP to flavin mononucleotide (FMN) to produce flavin adenine dinucleotide (FAD) coenzyme. The polypeptide is FAD synthase (Methanothermobacter thermautotrophicus (strain ATCC 29096 / DSM 1053 / JCM 10044 / NBRC 100330 / Delta H) (Methanobacterium thermoautotrophicum)).